The primary structure comprises 762 residues: Probable disease resistance protein At1g61300 (762 aa).

Glycine 2 carries the N-myristoyl glycine lipid modification. Residues cysteine 3 and cysteine 4 are each lipidated (S-palmitoyl cysteine). The NB-ARC domain maps to asparagine 26–valine 329. Position 68 to 75 (glycine 68 to threonine 75) interacts with ATP. LRR repeat units follow at residues alanine 401–serine 422, glutamate 423–tyrosine 444, lysine 447–valine 470, serine 471–lysine 493, and lysine 494–leucine 516.

Belongs to the disease resistance NB-LRR family.

It localises to the cell membrane. Probable disease resistance protein. This is Probable disease resistance protein At1g61300 from Arabidopsis thaliana (Mouse-ear cress).